A 100-amino-acid polypeptide reads, in one-letter code: Large ribosomal subunit protein uL23 (100 aa).

The protein belongs to the universal ribosomal protein uL23 family. As to quaternary structure, part of the 50S ribosomal subunit. Contacts protein L29, and trigger factor when it is bound to the ribosome.

Its function is as follows. One of the early assembly proteins it binds 23S rRNA. One of the proteins that surrounds the polypeptide exit tunnel on the outside of the ribosome. Forms the main docking site for trigger factor binding to the ribosome. This is Large ribosomal subunit protein uL23 from Aeromonas salmonicida (strain A449).